Here is a 302-residue protein sequence, read N- to C-terminus: Methionyl-tRNA formyltransferase (302 aa).

109-112 (SILP) lines the (6S)-5,6,7,8-tetrahydrofolate pocket.

Belongs to the Fmt family.

It carries out the reaction L-methionyl-tRNA(fMet) + (6R)-10-formyltetrahydrofolate = N-formyl-L-methionyl-tRNA(fMet) + (6S)-5,6,7,8-tetrahydrofolate + H(+). Functionally, attaches a formyl group to the free amino group of methionyl-tRNA(fMet). The formyl group appears to play a dual role in the initiator identity of N-formylmethionyl-tRNA by promoting its recognition by IF2 and preventing the misappropriation of this tRNA by the elongation apparatus. The protein is Methionyl-tRNA formyltransferase of Campylobacter hominis (strain ATCC BAA-381 / DSM 21671 / CCUG 45161 / LMG 19568 / NCTC 13146 / CH001A).